The primary structure comprises 477 residues: Methylenetetrahydrofolate--tRNA-(uracil-5-)-methyltransferase TrmFO (477 aa).

15–20 contributes to the FAD binding site; the sequence is GAGLAG.

The protein belongs to the MnmG family. TrmFO subfamily. FAD serves as cofactor.

It localises to the cytoplasm. The enzyme catalyses uridine(54) in tRNA + (6R)-5,10-methylene-5,6,7,8-tetrahydrofolate + NADH + H(+) = 5-methyluridine(54) in tRNA + (6S)-5,6,7,8-tetrahydrofolate + NAD(+). It catalyses the reaction uridine(54) in tRNA + (6R)-5,10-methylene-5,6,7,8-tetrahydrofolate + NADPH + H(+) = 5-methyluridine(54) in tRNA + (6S)-5,6,7,8-tetrahydrofolate + NADP(+). Catalyzes the folate-dependent formation of 5-methyl-uridine at position 54 (M-5-U54) in all tRNAs. In Nitrobacter hamburgensis (strain DSM 10229 / NCIMB 13809 / X14), this protein is Methylenetetrahydrofolate--tRNA-(uracil-5-)-methyltransferase TrmFO.